A 169-amino-acid chain; its full sequence is General odorant-binding protein 57a (169 aa).

The N-terminal stretch at 1–20 (MFNTRLAIFLLLIVVSLSQA) is a signal peptide. Intrachain disulfides connect Cys-39–Cys-77, Cys-73–Cys-120, and Cys-111–Cys-129.

This sequence belongs to the PBP/GOBP family.

Present in the aqueous fluid surrounding olfactory sensory dendrites and are thought to aid in the capture and transport of hydrophobic odorants into and through this fluid. In Drosophila melanogaster (Fruit fly), this protein is General odorant-binding protein 57a.